The sequence spans 157 residues: NADPH-dependent 7-cyano-7-deazaguanine reductase (157 aa).

The active-site Thioimide intermediate is Cys55. Asp62 (proton donor) is an active-site residue. Residues 77–79 (VES) and 96–97 (HE) contribute to the substrate site.

Belongs to the GTP cyclohydrolase I family. QueF type 1 subfamily.

It is found in the cytoplasm. The enzyme catalyses 7-aminomethyl-7-carbaguanine + 2 NADP(+) = 7-cyano-7-deazaguanine + 2 NADPH + 3 H(+). The protein operates within tRNA modification; tRNA-queuosine biosynthesis. Catalyzes the NADPH-dependent reduction of 7-cyano-7-deazaguanine (preQ0) to 7-aminomethyl-7-deazaguanine (preQ1). This chain is NADPH-dependent 7-cyano-7-deazaguanine reductase, found in Neisseria meningitidis serogroup C / serotype 2a (strain ATCC 700532 / DSM 15464 / FAM18).